Here is a 339-residue protein sequence, read N- to C-terminus: Hairy/enhancer-of-split related with YRPW motif protein 2 (339 aa).

Positions 1–52 are disordered; the sequence is MKRPCEETTSESDLDETIDVGSENNYPGHATSSVMRSNSPTTTSQIMARKKR. The segment covering 8–18 has biased composition (acidic residues); it reads TTSESDLDETI. Residues 22-46 show a composition bias toward polar residues; sequence SENNYPGHATSSVMRSNSPTTTSQI. The tract at residues 47–116 is transcriptional repression and interaction with NCOR1 and SIN3A; that stretch reads MARKKRRGII…GGKGYFDAHA (70 aa). Residues 48-103 enclose the bHLH domain; it reads ARKKRRGIIEKRRRDRINNSLSELRRLVPTAFEKQGSAKLEKAEILQMTVDHLKML. The Orange domain occupies 122–157; that stretch reads MSIGFRECLTEVARYLSSVEGLDPSDPLRVRLVSHL. A disordered region spans residues 310-339; it reads SVSAASSPQQTSTGTNNKPYQPWGTEVGAF. Positions 318–328 are enriched in polar residues; it reads QQTSTGTNNKP. A YQPW motif motif is present at residues 329–332; that stretch reads YQPW.

Belongs to the HEY family. In terms of assembly, may self-associate. Interacts with ARNT. Interacts with GATA4, GATA6, HES1 and HEYL. Interacts with HDAC1, NCOR1 and SIN3A. As to expression, highly expressed in the aorta, lower expression detected in the heart, brain, kidney, lung, muscle, ovary and testis.

Its subcellular location is the nucleus. Its function is as follows. Transcriptional repressor which functions as a downstream effector of Notch signaling in cardiovascular development. Specifically required for the Notch-induced endocardial epithelial to mesenchymal transition, which is itself criticial for cardiac valve and septum development. May be required in conjunction with HEY1 to specify arterial cell fate or identity. Promotes maintenance of neuronal precursor cells and glial versus neuronal fate specification. Binds preferentially to the canonical E box sequence 5'-CACGTG-3'. Represses transcription by the cardiac transcriptional activators GATA4 and GATA6 and by the neuronal bHLH factors ASCL1/MASH1 and NEUROD4/MATH3. The chain is Hairy/enhancer-of-split related with YRPW motif protein 2 (Hey2) from Mus musculus (Mouse).